Reading from the N-terminus, the 585-residue chain is Switch-associated protein 70 (585 aa).

In terms of domain architecture, PH spans 210-306 (DVLKQGYMIK…WIQAIHSTIH (97 aa)). The stretch at 316-532 (HKEARQRRKE…KLEMAAKMTK (217 aa)) forms a coiled coil.

In terms of assembly, the SWAP complex consists of NPM1, NCL, PARP1 and SWAP70. Post-translationally, tyrosine-phosphorylated.

It is found in the cytoplasm. Its subcellular location is the cell membrane. The protein resides in the nucleus. It localises to the cell projection. The protein localises to the lamellipodium. Functionally, phosphatidylinositol 3,4,5-trisphosphate-dependent guanine nucleotide exchange factor (GEF) which, independently of RAS, transduces signals from tyrosine kinase receptors to RAC. It also mediates signaling of membrane ruffling. Regulates the actin cytoskeleton as an effector or adapter protein in response to agonist stimulated phosphatidylinositol (3,4)-bisphosphate production and cell protrusion. This Bos taurus (Bovine) protein is Switch-associated protein 70 (SWAP70).